The chain runs to 384 residues: S-adenosylmethionine synthase (384 aa).

Residue His15 participates in ATP binding. Residue Asp17 coordinates Mg(2+). Residue Glu43 coordinates K(+). L-methionine-binding residues include Glu56 and Gln99. Positions 99–109 (QSPDINQGVDR) are flexible loop. Residues 164 to 166 (DAK), 230 to 231 (RF), Asp239, 245 to 246 (RK), Ala262, and Lys266 each bind ATP. Position 239 (Asp239) interacts with L-methionine. Residue Lys270 participates in L-methionine binding.

It belongs to the AdoMet synthase family. Homotetramer; dimer of dimers. Requires Mg(2+) as cofactor. K(+) is required as a cofactor.

The protein resides in the cytoplasm. The enzyme catalyses L-methionine + ATP + H2O = S-adenosyl-L-methionine + phosphate + diphosphate. Its pathway is amino-acid biosynthesis; S-adenosyl-L-methionine biosynthesis; S-adenosyl-L-methionine from L-methionine: step 1/1. Functionally, catalyzes the formation of S-adenosylmethionine (AdoMet) from methionine and ATP. The overall synthetic reaction is composed of two sequential steps, AdoMet formation and the subsequent tripolyphosphate hydrolysis which occurs prior to release of AdoMet from the enzyme. This chain is S-adenosylmethionine synthase, found in Salmonella gallinarum (strain 287/91 / NCTC 13346).